Reading from the N-terminus, the 427-residue chain is tRNA(Ile)-lysidine synthase (427 aa).

ATP is bound at residue 25 to 30 (SGGLDS).

Belongs to the tRNA(Ile)-lysidine synthase family.

The protein resides in the cytoplasm. The catalysed reaction is cytidine(34) in tRNA(Ile2) + L-lysine + ATP = lysidine(34) in tRNA(Ile2) + AMP + diphosphate + H(+). Ligates lysine onto the cytidine present at position 34 of the AUA codon-specific tRNA(Ile) that contains the anticodon CAU, in an ATP-dependent manner. Cytidine is converted to lysidine, thus changing the amino acid specificity of the tRNA from methionine to isoleucine. The sequence is that of tRNA(Ile)-lysidine synthase from Histophilus somni (strain 2336) (Haemophilus somnus).